Reading from the N-terminus, the 202-residue chain is Urease accessory protein UreG (202 aa).

Residue 13-20 (GPVGAGKT) coordinates GTP.

This sequence belongs to the SIMIBI class G3E GTPase family. UreG subfamily. In terms of assembly, homodimer. UreD, UreF and UreG form a complex that acts as a GTP-hydrolysis-dependent molecular chaperone, activating the urease apoprotein by helping to assemble the nickel containing metallocenter of UreC. The UreE protein probably delivers the nickel.

It localises to the cytoplasm. In terms of biological role, facilitates the functional incorporation of the urease nickel metallocenter. This process requires GTP hydrolysis, probably effectuated by UreG. In Dinoroseobacter shibae (strain DSM 16493 / NCIMB 14021 / DFL 12), this protein is Urease accessory protein UreG.